Consider the following 75-residue polypeptide: Small ribosomal subunit protein bS18 (75 aa).

This sequence belongs to the bacterial ribosomal protein bS18 family. Part of the 30S ribosomal subunit. Forms a tight heterodimer with protein bS6.

Its function is as follows. Binds as a heterodimer with protein bS6 to the central domain of the 16S rRNA, where it helps stabilize the platform of the 30S subunit. The polypeptide is Small ribosomal subunit protein bS18 (Pseudoalteromonas atlantica (strain T6c / ATCC BAA-1087)).